Here is a 231-residue protein sequence, read N- to C-terminus: Uracil-DNA glycosylase (231 aa).

The active-site Proton acceptor is the aspartate 74.

It belongs to the uracil-DNA glycosylase (UDG) superfamily. UNG family.

The protein localises to the cytoplasm. It carries out the reaction Hydrolyzes single-stranded DNA or mismatched double-stranded DNA and polynucleotides, releasing free uracil.. Excises uracil residues from the DNA which can arise as a result of misincorporation of dUMP residues by DNA polymerase or due to deamination of cytosine. The sequence is that of Uracil-DNA glycosylase from Campylobacter jejuni subsp. jejuni serotype O:23/36 (strain 81-176).